Consider the following 340-residue polypeptide: Heat-inducible transcription repressor HrcA (340 aa).

It belongs to the HrcA family.

Functionally, negative regulator of class I heat shock genes (grpE-dnaK-dnaJ and groELS operons). Prevents heat-shock induction of these operons. In Mycoplasma capricolum subsp. capricolum (strain California kid / ATCC 27343 / NCTC 10154), this protein is Heat-inducible transcription repressor HrcA.